A 2586-amino-acid chain; its full sequence is Highly reducing polyketide synthase FUM1 (2586 aa).

The Ketosynthase family 3 (KS3) domain maps to 29-451 (VLPVAIVGMG…GANAHCIIET (423 aa)). Active-site for beta-ketoacyl synthase activity residues include C201, H336, and H374. Residues 609-928 (IFTGQGAQWV…TESLLKLAGE (320 aa)) are malonyl-CoA:ACP transacylase (MAT) domain. Residues 980–1111 (HELLGSRTLE…GQVRPGQDAH (132 aa)) are N-terminal hotdog fold. Residues 980 to 1269 (HELLGSRTLE…LEDGKFSPLE (290 aa)) are dehydratase (DH) domain. Residues 980–1274 (HELLGSRTLE…FSPLEMDLAE (295 aa)) enclose the PKS/mFAS DH domain. H1012 (proton acceptor; for dehydratase activity) is an active-site residue. Residues 1125-1274 (QHYPRLVDNL…FSPLEMDLAE (150 aa)) form a C-terminal hotdog fold region. Residue D1186 is the Proton donor; for dehydratase activity of the active site. The methyltransferase (CMet) domain stretch occupies residues 1450-1627 (DFFATAGHTR…GFSGVDSAIY (178 aa)). Positions 1862 to 2172 (GLLQTLGWVP…KGVHLGKIVV (311 aa)) are enoyl reductase (ER) (ER) domain. The interval 2197–2373 (ASYLLVGGLG…ASVLQIGLIE (177 aa)) is ketoreductase (KR) domain. Residues 2486–2565 (PATVELVTNE…GLARLTVDGL (80 aa)) enclose the Carrier domain. The residue at position 2524 (S2524) is an O-(pantetheine 4'-phosphoryl)serine.

The protein operates within mycotoxin biosynthesis. In terms of biological role, highly reducing polyketide synthase; part of the gene cluster that mediates the biosynthesis of fumonisins B1 (FB1), B2 (FB2), B3 (FB3), and B4 (FB4), which are carcinogenic mycotoxins. The biosynthesis starts with the FUM1-catalyzed carbon chain assembly from one molecule of acetyl-CoA, eight molecules of malonyl-CoA, and two molecules of methionine (in S-adenosyl form). The C18 polyketide chain is released from the enzyme by a nucleophilic attack of a carbanion, which is derived from R-carbon of alanine by decarboxylation, on the carbonyl carbon of polyketide acyl chain. This step is catalyzed by the pyridoxal 5'-phosphate-dependent aminoacyl transferase FUM8. The resultant 3-keto intermediate is then stereospecifically reduced to a 3-hydroxyl product by reductase FUM13. Subsequent oxidations at C-10 by the cytochrome P450 monooxygenase FUM2, C-14 and C-15 by FUM6, FUM12 or FUM15, tricarballylic esterification of the hydroxyl groups on C-14 and C-15 by acyltransferase FUM14, and C-5 hydroxylation by 2-keto-glutarate-dependent dioxygenase FUM3 furnish the biosynthesis of fumonisins. The tricarballylic moieties are most likely derived from the citric acid cycle, and their addition to the carbon backbone may involve FUM7, FUM10, FUM11 and FUM14. The polypeptide is Highly reducing polyketide synthase FUM1 (Gibberella moniliformis (strain M3125 / FGSC 7600) (Maize ear and stalk rot fungus)).